The sequence spans 197 residues: Ras-related protein RabG2 (197 aa).

Residues 13 to 20 (GDSAVGKT), 61 to 65 (DTAGQ), and 119 to 122 (NKCD) each bind GTP. Residues 175–197 (SKPSVVNPGSGGTSNTGGKKKFC) are disordered. A lipid anchor (S-geranylgeranyl cysteine) is attached at Cys-197.

It belongs to the small GTPase superfamily. Rab family.

The protein localises to the cell membrane. The polypeptide is Ras-related protein RabG2 (rabG2) (Dictyostelium discoideum (Social amoeba)).